Consider the following 45-residue polypeptide: Temporin-SHf (45 aa).

Residues 1-10 (FLGTINLSLC) form the signal peptide. The propeptide occupies 11 to 35 (EEERDADEEERRDEPDESNVEVKKR). F43 is subject to Phenylalanine amide.

This sequence belongs to the frog skin active peptide (FSAP) family. Temporin subfamily.

It is found in the secreted. It localises to the target cell membrane. Its function is as follows. Non-amphipathic alpha-helical antimicrobial peptide with potent activity against some Gram-positive bacteria (including methicillin-resistant Staphylococcus aureus (MRSA)), weak activity against Gram-negative bacteria and no activity against fungi. Permeabilizates membranes through a detergent-like effect probably via the carpet mechanism. More precisely, it strongly and selectively perturbs anionic bilayers membranes by interacting with the polar headgroups and the glycerol backbone region of the phospholipids, hence disrupting the acyl chain packing of the bilayer. Is not active against Leishmania (promastigote and axenic amastigote forms). Does not show hemolytic activity. Does not show toxicity for human THP-1-derived macrophages. This chain is Temporin-SHf, found in Pelophylax saharicus (Sahara frog).